The sequence spans 449 residues: uncharacterized protein (449 aa).

Positions 1 to 20 (MWTALVLIWIFSLSLSESHA) are cleaved as a signal peptide. Topologically, residues 21–400 (ASNDPRNFVP…PLTQAVVDKT (380 aa)) are extracellular. The N-linked (GlcNAc...) asparagine glycan is linked to asparagine 49. Disordered stretches follow at residues 72–101 (AHLN…AADG), 154–187 (MTAA…GHPS), and 215–381 (QTVA…PSTQ). Composition is skewed to low complexity over residues 154–184 (MTAA…TATG) and 215–234 (QTVA…PSPS). Composition is skewed to polar residues over residues 255–279 (GPIS…MPSN) and 352–367 (TPGT…SSGG). Residues 401–421 (LLLVVLLLGVTLFITVLVLFA) form a helical membrane-spanning segment. Topologically, residues 422–449 (LQAYESYKKKDYTQVDYLINGMYADSEM) are cytoplasmic.

In terms of tissue distribution, highest expression in heart, placenta, liver, pancreas and colon. Also detected in brain, lung, skeletal muscle, kidney, spleen, prostate, testis, ovary and small intestine. Lowest expression in thymus and leukocytes.

The protein localises to the cell membrane. It is found in the golgi apparatus. The protein resides in the trans-Golgi network membrane. This is an uncharacterized protein from Homo sapiens (Human).